We begin with the raw amino-acid sequence, 196 residues long: Peptidyl-tRNA hydrolase (196 aa).

Y21 serves as a coordination point for tRNA. Catalysis depends on H26, which acts as the Proton acceptor. TRNA-binding residues include F72, N74, and N120.

Belongs to the PTH family. In terms of assembly, monomer.

It is found in the cytoplasm. It carries out the reaction an N-acyl-L-alpha-aminoacyl-tRNA + H2O = an N-acyl-L-amino acid + a tRNA + H(+). Functionally, hydrolyzes ribosome-free peptidyl-tRNAs (with 1 or more amino acids incorporated), which drop off the ribosome during protein synthesis, or as a result of ribosome stalling. In terms of biological role, catalyzes the release of premature peptidyl moieties from peptidyl-tRNA molecules trapped in stalled 50S ribosomal subunits, and thus maintains levels of free tRNAs and 50S ribosomes. The protein is Peptidyl-tRNA hydrolase of Mycobacteroides abscessus (strain ATCC 19977 / DSM 44196 / CCUG 20993 / CIP 104536 / JCM 13569 / NCTC 13031 / TMC 1543 / L948) (Mycobacterium abscessus).